Reading from the N-terminus, the 236-residue chain is Small ribosomal subunit protein uS5 (236 aa).

A compositionally biased stretch (basic and acidic residues) spans 1 to 10; that stretch reads MTENNEKDIQ. Residues 1-64 are disordered; that stretch reads MTENNEKDIQ…GRDGGREAEK (64 aa). Residues 11–27 show a composition bias toward low complexity; it reads VTEAVAAPATETAAPAT. The segment covering 28-64 has biased composition (basic and acidic residues); the sequence is TDDRRGGARRGERGDRGQGRGDRGGRGGRDGGREAEK. Residues 67–130 form the S5 DRBM domain; sequence FVERVVTINR…EEAKKSFFRV (64 aa).

It belongs to the universal ribosomal protein uS5 family. Part of the 30S ribosomal subunit. Contacts proteins S4 and S8.

Functionally, with S4 and S12 plays an important role in translational accuracy. Located at the back of the 30S subunit body where it stabilizes the conformation of the head with respect to the body. The polypeptide is Small ribosomal subunit protein uS5 (Arthrobacter sp. (strain FB24)).